Consider the following 441-residue polypeptide: Xaa-Pro dipeptidase (441 aa).

5 residues coordinate Mn(2+): D244, D255, H336, E381, and E420.

Belongs to the peptidase M24B family. Bacterial-type prolidase subfamily. The cofactor is Mn(2+).

It carries out the reaction Xaa-L-Pro dipeptide + H2O = an L-alpha-amino acid + L-proline. Splits dipeptides with a prolyl residue in the C-terminal position. The sequence is that of Xaa-Pro dipeptidase from Xanthomonas campestris pv. campestris (strain 8004).